A 125-amino-acid chain; its full sequence is Holo-[acyl-carrier-protein] synthase (125 aa).

The Mg(2+) site is built by Asp9 and Glu58.

The protein belongs to the P-Pant transferase superfamily. AcpS family. Mg(2+) is required as a cofactor.

It is found in the cytoplasm. The catalysed reaction is apo-[ACP] + CoA = holo-[ACP] + adenosine 3',5'-bisphosphate + H(+). Functionally, transfers the 4'-phosphopantetheine moiety from coenzyme A to a Ser of acyl-carrier-protein. This Shewanella amazonensis (strain ATCC BAA-1098 / SB2B) protein is Holo-[acyl-carrier-protein] synthase.